A 269-amino-acid chain; its full sequence is 3-methyl-2-oxobutanoate hydroxymethyltransferase (269 aa).

Asp-43 and Asp-82 together coordinate Mg(2+). 3-methyl-2-oxobutanoate-binding positions include 43-44 (DS), Asp-82, and Lys-110. Glu-112 serves as a coordination point for Mg(2+). Glu-179 (proton acceptor) is an active-site residue.

It belongs to the PanB family. As to quaternary structure, homodecamer; pentamer of dimers. Mg(2+) serves as cofactor.

It localises to the cytoplasm. The enzyme catalyses 3-methyl-2-oxobutanoate + (6R)-5,10-methylene-5,6,7,8-tetrahydrofolate + H2O = 2-dehydropantoate + (6S)-5,6,7,8-tetrahydrofolate. It participates in cofactor biosynthesis; (R)-pantothenate biosynthesis; (R)-pantoate from 3-methyl-2-oxobutanoate: step 1/2. Catalyzes the reversible reaction in which hydroxymethyl group from 5,10-methylenetetrahydrofolate is transferred onto alpha-ketoisovalerate to form ketopantoate. In Acinetobacter baylyi (strain ATCC 33305 / BD413 / ADP1), this protein is 3-methyl-2-oxobutanoate hydroxymethyltransferase.